Reading from the N-terminus, the 195-residue chain is 2-hydroxychromene-2-carboxylate isomerase (195 aa).

Ser13 (nucleophile) is an active-site residue. Residue Ser13 participates in glutathione binding. Residues Lys45 and 55-56 contribute to the substrate site; that span reads NR. 181–184 lines the glutathione pocket; the sequence is WGND.

The protein belongs to the GST superfamily. NadH family. The cofactor is glutathione.

It catalyses the reaction 2-hydroxychromene-2-carboxylate = (3E)-4-(2-hydroxyphenyl)-2-oxobut-3-enoate. Activated by salicylate. Its function is as follows. Involved in the naphthalene and naphthalenesulfonate catabolic pathway. Catalyzes the reversible glutathione-dependent isomerization of 2-hydroxychromene-2-carboxylate (HCCA) to trans-O-hydroxybenzylidenepyruvate (THBPA). It can also use 2-hydroxybenzo[g]chromene-2-carboxylate as substrate. The protein is 2-hydroxychromene-2-carboxylate isomerase (nsaD) of Sphingobium xenophagum.